We begin with the raw amino-acid sequence, 184 residues long: Large ribosomal subunit protein uL6 (184 aa).

The protein belongs to the universal ribosomal protein uL6 family. In terms of assembly, part of the 50S ribosomal subunit.

Its function is as follows. This protein binds to the 23S rRNA, and is important in its secondary structure. It is located near the subunit interface in the base of the L7/L12 stalk, and near the tRNA binding site of the peptidyltransferase center. The polypeptide is Large ribosomal subunit protein uL6 (Thermococcus onnurineus (strain NA1)).